The sequence spans 893 residues: DNA gyrase subunit A (893 aa).

Residues 35 to 501 (LPDVRDGLKP…GLEDLEDEDL (467 aa)) enclose the Topo IIA-type catalytic domain. Residue Tyr-123 is the O-(5'-phospho-DNA)-tyrosine intermediate of the active site. A GyrA-box motif is present at residues 528 to 534 (QNRGGRG). Residues 810–893 (VNEEDDNEEN…ASDNEEDSDE (84 aa)) are disordered. Acidic residues-rich tracts occupy residues 812–821 (EEDDNEENAD) and 852–862 (DAEMESVESPE). Basic and acidic residues predominate over residues 863-879 (NDDRIDIRQDFMDRVNE). A compositionally biased stretch (acidic residues) spans 880–893 (DIESASDNEEDSDE).

It belongs to the type II topoisomerase GyrA/ParC subunit family. As to quaternary structure, heterotetramer, composed of two GyrA and two GyrB chains. In the heterotetramer, GyrA contains the active site tyrosine that forms a transient covalent intermediate with DNA, while GyrB binds cofactors and catalyzes ATP hydrolysis.

It localises to the cytoplasm. It catalyses the reaction ATP-dependent breakage, passage and rejoining of double-stranded DNA.. Its function is as follows. A type II topoisomerase that negatively supercoils closed circular double-stranded (ds) DNA in an ATP-dependent manner to modulate DNA topology and maintain chromosomes in an underwound state. Negative supercoiling favors strand separation, and DNA replication, transcription, recombination and repair, all of which involve strand separation. Also able to catalyze the interconversion of other topological isomers of dsDNA rings, including catenanes and knotted rings. Type II topoisomerases break and join 2 DNA strands simultaneously in an ATP-dependent manner. This is DNA gyrase subunit A from Staphylococcus epidermidis (strain ATCC 12228 / FDA PCI 1200).